Consider the following 341-residue polypeptide: tRNA N6-adenosine threonylcarbamoyltransferase (341 aa).

The Fe cation site is built by His-111 and His-115. Substrate contacts are provided by residues 134–138 (LVSGG), Asp-167, Gly-180, and Asn-276. Asp-304 is a Fe cation binding site.

It belongs to the KAE1 / TsaD family. Requires Fe(2+) as cofactor.

Its subcellular location is the cytoplasm. The enzyme catalyses L-threonylcarbamoyladenylate + adenosine(37) in tRNA = N(6)-L-threonylcarbamoyladenosine(37) in tRNA + AMP + H(+). Its function is as follows. Required for the formation of a threonylcarbamoyl group on adenosine at position 37 (t(6)A37) in tRNAs that read codons beginning with adenine. Is involved in the transfer of the threonylcarbamoyl moiety of threonylcarbamoyl-AMP (TC-AMP) to the N6 group of A37, together with TsaE and TsaB. TsaD likely plays a direct catalytic role in this reaction. The protein is tRNA N6-adenosine threonylcarbamoyltransferase of Azotobacter vinelandii (strain DJ / ATCC BAA-1303).